A 439-amino-acid polypeptide reads, in one-letter code: Xylose isomerase (439 aa).

Catalysis depends on residues His-101 and Asp-104. Positions 232, 268, 271, 296, 307, 309, and 339 each coordinate Mg(2+).

Belongs to the xylose isomerase family. As to quaternary structure, homotetramer. It depends on Mg(2+) as a cofactor.

Its subcellular location is the cytoplasm. It carries out the reaction alpha-D-xylose = alpha-D-xylulofuranose. The sequence is that of Xylose isomerase from Photobacterium profundum (strain SS9).